The sequence spans 400 residues: Elongation factor Tu (400 aa).

The 200-residue stretch at 10-209 folds into the tr-type G domain; that stretch reads KPHINIGTIG…AVDDYIPTPE (200 aa). Positions 19–26 are G1; that stretch reads GHVDHGKT. 19–26 contacts GTP; sequence GHVDHGKT. Threonine 26 lines the Mg(2+) pocket. Positions 60 to 64 are G2; that stretch reads GITIS. The tract at residues 81-84 is G3; it reads DCPG. GTP is bound by residues 81–85 and 136–139; these read DCPGH and NKVD. The G4 stretch occupies residues 136–139; sequence NKVD. The tract at residues 174–176 is G5; sequence SAK.

The protein belongs to the TRAFAC class translation factor GTPase superfamily. Classic translation factor GTPase family. EF-Tu/EF-1A subfamily. As to quaternary structure, monomer.

It is found in the cytoplasm. The catalysed reaction is GTP + H2O = GDP + phosphate + H(+). GTP hydrolase that promotes the GTP-dependent binding of aminoacyl-tRNA to the A-site of ribosomes during protein biosynthesis. The sequence is that of Elongation factor Tu from Herpetosiphon aurantiacus (Herpetosiphon giganteus).